The chain runs to 236 residues: Biosynthetic peptidoglycan transglycosylase (236 aa).

The chain crosses the membrane as a helical span at residues 12–31 (ALLWFVAGSIVLVLVFRWVP).

Belongs to the glycosyltransferase 51 family.

It localises to the cell inner membrane. The enzyme catalyses [GlcNAc-(1-&gt;4)-Mur2Ac(oyl-L-Ala-gamma-D-Glu-L-Lys-D-Ala-D-Ala)](n)-di-trans,octa-cis-undecaprenyl diphosphate + beta-D-GlcNAc-(1-&gt;4)-Mur2Ac(oyl-L-Ala-gamma-D-Glu-L-Lys-D-Ala-D-Ala)-di-trans,octa-cis-undecaprenyl diphosphate = [GlcNAc-(1-&gt;4)-Mur2Ac(oyl-L-Ala-gamma-D-Glu-L-Lys-D-Ala-D-Ala)](n+1)-di-trans,octa-cis-undecaprenyl diphosphate + di-trans,octa-cis-undecaprenyl diphosphate + H(+). Its pathway is cell wall biogenesis; peptidoglycan biosynthesis. Its function is as follows. Peptidoglycan polymerase that catalyzes glycan chain elongation from lipid-linked precursors. The chain is Biosynthetic peptidoglycan transglycosylase from Pseudomonas putida (strain ATCC 700007 / DSM 6899 / JCM 31910 / BCRC 17059 / LMG 24140 / F1).